The primary structure comprises 184 residues: Photosystem I assembly protein Ycf4 (184 aa).

The next 2 helical transmembrane spans lie at 22–42 (FCWA…GISS) and 57–77 (IIFF…LFIS).

This sequence belongs to the Ycf4 family.

Its subcellular location is the plastid. It is found in the chloroplast thylakoid membrane. Functionally, seems to be required for the assembly of the photosystem I complex. This Ipomoea purpurea (Common morning glory) protein is Photosystem I assembly protein Ycf4.